Reading from the N-terminus, the 344-residue chain is Anthranilate phosphoribosyltransferase (344 aa).

5-phospho-alpha-D-ribose 1-diphosphate is bound by residues Gly81, 84–85, Ser89, 91–94, 109–117, and Ala121; these read GD, NIST, and KHGNRALSS. Residue Gly81 coordinates anthranilate. Ser93 provides a ligand contact to Mg(2+). Residue Asn112 coordinates anthranilate. Residue Arg167 coordinates anthranilate. Asp226 and Glu227 together coordinate Mg(2+).

The protein belongs to the anthranilate phosphoribosyltransferase family. Homodimer. Requires Mg(2+) as cofactor.

It carries out the reaction N-(5-phospho-beta-D-ribosyl)anthranilate + diphosphate = 5-phospho-alpha-D-ribose 1-diphosphate + anthranilate. Its pathway is amino-acid biosynthesis; L-tryptophan biosynthesis; L-tryptophan from chorismate: step 2/5. In terms of biological role, catalyzes the transfer of the phosphoribosyl group of 5-phosphorylribose-1-pyrophosphate (PRPP) to anthranilate to yield N-(5'-phosphoribosyl)-anthranilate (PRA). This is Anthranilate phosphoribosyltransferase from Azorhizobium caulinodans (strain ATCC 43989 / DSM 5975 / JCM 20966 / LMG 6465 / NBRC 14845 / NCIMB 13405 / ORS 571).